A 273-amino-acid polypeptide reads, in one-letter code: 4-hydroxy-tetrahydrodipicolinate reductase (273 aa).

Residues Gly-12 to Met-17 and Glu-38 each bind NAD(+). An NADP(+)-binding site is contributed by Arg-39. Residues Gly-102 to Thr-104 and Ala-126 to Phe-129 each bind NAD(+). The Proton donor/acceptor role is filled by His-159. (S)-2,3,4,5-tetrahydrodipicolinate is bound at residue His-160. The active-site Proton donor is the Lys-163. (S)-2,3,4,5-tetrahydrodipicolinate is bound at residue Gly-169–Thr-170.

The protein belongs to the DapB family. Homotetramer.

It is found in the cytoplasm. It catalyses the reaction (S)-2,3,4,5-tetrahydrodipicolinate + NAD(+) + H2O = (2S,4S)-4-hydroxy-2,3,4,5-tetrahydrodipicolinate + NADH + H(+). The catalysed reaction is (S)-2,3,4,5-tetrahydrodipicolinate + NADP(+) + H2O = (2S,4S)-4-hydroxy-2,3,4,5-tetrahydrodipicolinate + NADPH + H(+). Its pathway is amino-acid biosynthesis; L-lysine biosynthesis via DAP pathway; (S)-tetrahydrodipicolinate from L-aspartate: step 4/4. Its function is as follows. Catalyzes the conversion of 4-hydroxy-tetrahydrodipicolinate (HTPA) to tetrahydrodipicolinate. The chain is 4-hydroxy-tetrahydrodipicolinate reductase from Pectobacterium carotovorum subsp. carotovorum (strain PC1).